Here is a 94-residue protein sequence, read N- to C-terminus: Aspartyl/glutamyl-tRNA(Asn/Gln) amidotransferase subunit C (94 aa).

Belongs to the GatC family. Heterotrimer of A, B and C subunits.

It catalyses the reaction L-glutamyl-tRNA(Gln) + L-glutamine + ATP + H2O = L-glutaminyl-tRNA(Gln) + L-glutamate + ADP + phosphate + H(+). It carries out the reaction L-aspartyl-tRNA(Asn) + L-glutamine + ATP + H2O = L-asparaginyl-tRNA(Asn) + L-glutamate + ADP + phosphate + 2 H(+). In terms of biological role, allows the formation of correctly charged Asn-tRNA(Asn) or Gln-tRNA(Gln) through the transamidation of misacylated Asp-tRNA(Asn) or Glu-tRNA(Gln) in organisms which lack either or both of asparaginyl-tRNA or glutaminyl-tRNA synthetases. The reaction takes place in the presence of glutamine and ATP through an activated phospho-Asp-tRNA(Asn) or phospho-Glu-tRNA(Gln). The polypeptide is Aspartyl/glutamyl-tRNA(Asn/Gln) amidotransferase subunit C (Campylobacter jejuni subsp. doylei (strain ATCC BAA-1458 / RM4099 / 269.97)).